We begin with the raw amino-acid sequence, 695 residues long: Probable rhamnogalacturonate lyase C (695 aa).

The first 21 residues, 1-21, serve as a signal peptide directing secretion; sequence MFLPSRKALAFLACLASHSVA. Residues N28, N96, N118, N144, N199, N285, N532, and N638 are each glycosylated (N-linked (GlcNAc...) asparagine).

The protein belongs to the polysaccharide lyase 4 family.

The protein resides in the secreted. It carries out the reaction Endotype eliminative cleavage of L-alpha-rhamnopyranosyl-(1-&gt;4)-alpha-D-galactopyranosyluronic acid bonds of rhamnogalacturonan I domains in ramified hairy regions of pectin leaving L-rhamnopyranose at the reducing end and 4-deoxy-4,5-unsaturated D-galactopyranosyluronic acid at the non-reducing end.. In terms of biological role, pectinolytic enzymes consist of four classes of enzymes: pectin lyase, polygalacturonase, pectin methylesterase and rhamnogalacturonase. Degrades the rhamnogalacturonan I (RG-I) backbone of pectin. The protein is Probable rhamnogalacturonate lyase C (rglC) of Aspergillus oryzae (strain ATCC 42149 / RIB 40) (Yellow koji mold).